Here is a 492-residue protein sequence, read N- to C-terminus: Probable glycine dehydrogenase (decarboxylating) subunit 2 (492 aa).

N6-(pyridoxal phosphate)lysine is present on lysine 274.

The protein belongs to the GcvP family. C-terminal subunit subfamily. As to quaternary structure, the glycine cleavage system is composed of four proteins: P, T, L and H. In this organism, the P 'protein' is a heterodimer of two subunits. Requires pyridoxal 5'-phosphate as cofactor.

It catalyses the reaction N(6)-[(R)-lipoyl]-L-lysyl-[glycine-cleavage complex H protein] + glycine + H(+) = N(6)-[(R)-S(8)-aminomethyldihydrolipoyl]-L-lysyl-[glycine-cleavage complex H protein] + CO2. Its function is as follows. The glycine cleavage system catalyzes the degradation of glycine. The P protein binds the alpha-amino group of glycine through its pyridoxal phosphate cofactor; CO(2) is released and the remaining methylamine moiety is then transferred to the lipoamide cofactor of the H protein. The sequence is that of Probable glycine dehydrogenase (decarboxylating) subunit 2 from Exiguobacterium sibiricum (strain DSM 17290 / CCUG 55495 / CIP 109462 / JCM 13490 / 255-15).